Here is a 565-residue protein sequence, read N- to C-terminus: MPQQRETAHKTREWKKLTEYADATRGTQLRELFTEQPGRSSDMTYNVGPLHVDLSKNLIDERGLRLLLDLARARGLEDYRSAMFDGEHINTTEDRAVLHTALRIPVDREFSIPVGADETQDVAADVHAVLGRMRDFAKALRSGSWQGVTGHTIKHVVNIGIGGSDLGPAMAAQALRPYMTAGITPHFISNIDPADVAGTLDGLDAESTLFVIASKTFTTSETLANAHAARRWLLRNLADAGVDVEGDDAIRDITAKHFVAVSTAAEKVQEFGIDTKNMFEFWDWVGGRYSVDSAIGLSLMAAIGPQDFMRFLEGFHEVDDHFRTEPLEMNIPVLMGMLGVWYTDFLGAQSHAVLPYSEDMARFPAYLQQLTMESNGKSVQLDGTPVEVPSGEIYWGEPGTNGQHAFFQLLHQGTHLVPADFIGFVNPHDDAVAADGTTSMHDMLMSNFFAQTRVLAFGKNAEELKEEGVAPELIPHKVMPGNRPTTTILANKLTPKTLGALIALYEHIVFVQGVIWGINSFDQWGVELGKKQANALLPAVTGAERSDAGDSSTDDLIAYYRQHRD.

The Proton donor role is filled by E373. Active-site residues include H404 and K530.

It belongs to the GPI family.

It is found in the cytoplasm. The enzyme catalyses alpha-D-glucose 6-phosphate = beta-D-fructose 6-phosphate. It functions in the pathway carbohydrate biosynthesis; gluconeogenesis. Its pathway is carbohydrate degradation; glycolysis; D-glyceraldehyde 3-phosphate and glycerone phosphate from D-glucose: step 2/4. Catalyzes the reversible isomerization of glucose-6-phosphate to fructose-6-phosphate. This chain is Glucose-6-phosphate isomerase, found in Corynebacterium jeikeium (strain K411).